The following is a 262-amino-acid chain: Indole-3-glycerol phosphate synthase (262 aa).

The protein belongs to the TrpC family.

The enzyme catalyses 1-(2-carboxyphenylamino)-1-deoxy-D-ribulose 5-phosphate + H(+) = (1S,2R)-1-C-(indol-3-yl)glycerol 3-phosphate + CO2 + H2O. Its pathway is amino-acid biosynthesis; L-tryptophan biosynthesis; L-tryptophan from chorismate: step 4/5. The polypeptide is Indole-3-glycerol phosphate synthase (Staphylococcus epidermidis (strain ATCC 12228 / FDA PCI 1200)).